A 125-amino-acid polypeptide reads, in one-letter code: Small ribosomal subunit protein uS12 (125 aa).

D89 carries the 3-methylthioaspartic acid modification.

The protein belongs to the universal ribosomal protein uS12 family. Part of the 30S ribosomal subunit. Contacts proteins S8 and S17. May interact with IF1 in the 30S initiation complex.

Its function is as follows. With S4 and S5 plays an important role in translational accuracy. Interacts with and stabilizes bases of the 16S rRNA that are involved in tRNA selection in the A site and with the mRNA backbone. Located at the interface of the 30S and 50S subunits, it traverses the body of the 30S subunit contacting proteins on the other side and probably holding the rRNA structure together. The combined cluster of proteins S8, S12 and S17 appears to hold together the shoulder and platform of the 30S subunit. The chain is Small ribosomal subunit protein uS12 from Bordetella petrii (strain ATCC BAA-461 / DSM 12804 / CCUG 43448).